The chain runs to 346 residues: MIKAGILGSTGYAGAELVRLLTGHPEVEIQFLDSRSYHGKAYEEVYPSLKNIVKGKCASIDLENDFEGIDILFCALPHGLSQEAVKRMMAKGKRVIDLSADFRITDPKVYEAWYDVRHQALGELGKAVYGLSEIYPKEIQEAQLVANPGCYPTSIALALYPLLKENVISTESIIIDAKSGVSGAGRNLNDGTLFSQCNENIKAYSIGTHRHIPEIEQELSLAAGKEMIIQFTPHLVPMNRGILSTIYTTNIKNVKENDIEAIYAHYYEEKRFVRLLKEGKLPQTKAVSGSNYCDIGFKVDPRTNGLIVVSAIDNLVKGAAGQAVQNMNMMLGLKEYIGLEQMPIWP.

Cys150 is a catalytic residue.

Belongs to the NAGSA dehydrogenase family. Type 1 subfamily.

The protein localises to the cytoplasm. The catalysed reaction is N-acetyl-L-glutamate 5-semialdehyde + phosphate + NADP(+) = N-acetyl-L-glutamyl 5-phosphate + NADPH + H(+). The protein operates within amino-acid biosynthesis; L-arginine biosynthesis; N(2)-acetyl-L-ornithine from L-glutamate: step 3/4. Functionally, catalyzes the NADPH-dependent reduction of N-acetyl-5-glutamyl phosphate to yield N-acetyl-L-glutamate 5-semialdehyde. The sequence is that of N-acetyl-gamma-glutamyl-phosphate reductase from Alkaliphilus metalliredigens (strain QYMF).